The chain runs to 365 residues: Eukaryotic translation initiation factor 3 subunit H (365 aa).

Residues 11–160 (VKVEALVVMK…LRAFRLSPKF (150 aa)) enclose the MPN domain.

Belongs to the eIF-3 subunit H family. As to quaternary structure, component of the eukaryotic translation initiation factor 3 (eIF-3) complex.

Its subcellular location is the cytoplasm. In terms of biological role, component of the eukaryotic translation initiation factor 3 (eIF-3) complex, which is involved in protein synthesis of a specialized repertoire of mRNAs and, together with other initiation factors, stimulates binding of mRNA and methionyl-tRNAi to the 40S ribosome. The eIF-3 complex specifically targets and initiates translation of a subset of mRNAs involved in cell proliferation. The chain is Eukaryotic translation initiation factor 3 subunit H from Aspergillus terreus (strain NIH 2624 / FGSC A1156).